The primary structure comprises 561 residues: Centromere protein T (561 aa).

The interval Met1–Arg78 is disordered. Residues Arg18 to Thr27 are compositionally biased toward basic and acidic residues. Residues Thr45–Thr57 show a composition bias toward polar residues. Ser47 carries the phosphoserine modification. Thr85 carries the phosphothreonine modification. Positions Ile93–Pro421 are flexible stalk domain. 3 disordered regions span residues Ala114–Leu134, His256–Ala293, and Ser314–Lys457. Residues Arg276–Pro289 are compositionally biased toward polar residues. The segment covering Gly329–Gly341 has biased composition (basic and acidic residues). A phosphoserine mark is found at Ser343, Ser345, Ser356, Ser373, Ser385, Ser386, and Ser397. Polar residues predominate over residues Thr365–Thr376. Positions Arg439–Arg450 are enriched in low complexity.

The protein belongs to the CENP-T/CNN1 family. In terms of assembly, component of the CENPA-CAD complex, composed of CENPI, CENPK, CENPL, CENPO, CENPP, CENPQ, CENPR and CENPS. The CENPA-CAD complex is probably recruited on centromeres by the CENPA-NAC complex, at least composed of CENPA, CENPC, CENPH, CENPM, CENPN, CENPT and CENPU. Identified in a centromeric complex containing histones H2A, H2B, H3 and H4, and at least CENPA, CENPB, CENPC, CENPT, CENPN, HJURP, SUPT16H, SSRP1 and RSF1. Interacts (via N-terminus) with the NDC80 complex. Heterodimer with CENPW; this dimer coassembles with CENPS-CENPX heterodimers at centromeres to form the tetrameric CENP-T-W-S-X complex. Post-translationally, dynamically phosphorylated during the cell cycle. Phosphorylated during G2 phase, metaphase and anaphase, but not during telophase or G1 phase.

The protein localises to the nucleus. Its subcellular location is the chromosome. The protein resides in the centromere. It is found in the kinetochore. Functionally, component of the CENPA-NAC (nucleosome-associated) complex, a complex that plays a central role in assembly of kinetochore proteins, mitotic progression and chromosome segregation. The CENPA-NAC complex recruits the CENPA-CAD (nucleosome distal) complex and may be involved in incorporation of newly synthesized CENPA into centromeres. Part of a nucleosome-associated complex that binds specifically to histone H3-containing nucleosomes at the centromere, as opposed to nucleosomes containing CENPA. Component of the heterotetrameric CENP-T-W-S-X complex that binds and supercoils DNA, and plays an important role in kinetochore assembly. CENPT has a fundamental role in kinetochore assembly and function. It is one of the inner kinetochore proteins, with most further proteins binding downstream. Required for normal chromosome organization and normal progress through mitosis. This Macaca fascicularis (Crab-eating macaque) protein is Centromere protein T (CENPT).